Here is a 219-residue protein sequence, read N- to C-terminus: Cytidylate kinase (219 aa).

An ATP-binding site is contributed by 21 to 29 (GPAASGKGT).

The protein belongs to the cytidylate kinase family. Type 1 subfamily.

The protein localises to the cytoplasm. The enzyme catalyses CMP + ATP = CDP + ADP. It catalyses the reaction dCMP + ATP = dCDP + ADP. In Rickettsia africae (strain ESF-5), this protein is Cytidylate kinase.